Here is a 378-residue protein sequence, read N- to C-terminus: MKILVDENMPYARDLFSRLGEVTAVPGRPIPVAQLADADALMVRSVTKVNESLLAGKPIKFVGTATAGTDHVDEAWLKQAGIGFSAAPGCNAIAVVEYVFSSLLMLAERDGFSLHERTVGIVGVGNVGRRLQARLEALGIKTLLCDPPRADRGDEGDFRSLDELVQRADILTFHTPLFKDGPYKTLHLADEKLIRSLKPGAILINACRGAVVDNTALLTCLNEGQKLSVVLDVWEGEPELNVELLTKVDIGTPHIAGYTLEGKARGTTQVFEAYSKFIGHKQHVALDTLLPAPEFGRITLHGPLDQPTLKRLVHLVYDVRRDDAPLRKVAGIPGEFDKLRKNYLERREWSSLYVICDDASAASLLCKLGFNAVHHPAR.

2 residues coordinate substrate: Ser45 and Thr66. Residues Asp146 and Thr175 each contribute to the NAD(+) site. The active site involves Arg208. Residue Asp232 participates in NAD(+) binding. The active site involves Glu237. The active-site Proton donor is His254. Gly257 serves as a coordination point for NAD(+). Position 258 (Tyr258) interacts with substrate.

The protein belongs to the D-isomer specific 2-hydroxyacid dehydrogenase family. PdxB subfamily. Homodimer.

It localises to the cytoplasm. It catalyses the reaction 4-phospho-D-erythronate + NAD(+) = (R)-3-hydroxy-2-oxo-4-phosphooxybutanoate + NADH + H(+). Its pathway is cofactor biosynthesis; pyridoxine 5'-phosphate biosynthesis; pyridoxine 5'-phosphate from D-erythrose 4-phosphate: step 2/5. In terms of biological role, catalyzes the oxidation of erythronate-4-phosphate to 3-hydroxy-2-oxo-4-phosphonooxybutanoate. The polypeptide is Erythronate-4-phosphate dehydrogenase (Shigella dysenteriae serotype 1 (strain Sd197)).